The primary structure comprises 437 residues: Eukaryotic peptide chain release factor subunit 1 (437 aa).

The NIKS motif; plays an important role in translational termination motif lies at 61-64 (NIKS).

Belongs to the eukaryotic release factor 1 family. Component of the eRF1-eRF3-GTP ternary complex, composed of ETF1/ERF1 and eRF3 (GSPT1/ERF3A or GSPT2/ERF3B) and GTP.

Its subcellular location is the cytoplasm. Functionally, component of the eRF1-eRF3-GTP ternary complex, a ternary complex that mediates translation termination in response to the termination codons. The eRF1-eRF3-GTP complex binds to a stop codon in the ribosomal A-site. ETF1/ERF1 is responsible for stop codon recognition and inducing hydrolysis of peptidyl-tRNA. Following GTP hydrolysis, eRF3 (GSPT1/ERF3A or GSPT2/ERF3B) dissociates, permitting ETF1/eRF1 to accommodate fully in the A-site, followed by hydrolysis of peptidyl-tRNA. The protein is Eukaryotic peptide chain release factor subunit 1 (etf1) of Xenopus tropicalis (Western clawed frog).